The following is a 319-amino-acid chain: GATA transcription factor 18 (319 aa).

Residues 1-15 show a composition bias toward low complexity; the sequence is MPDAAAAAAAAQDAD. The segment at 1–74 is disordered; it reads MPDAAAAAAA…AAPEPVSALL (74 aa). Acidic residues predominate over residues 32–60; it reads NNDDDGDDGTEEDEEEDDDEEGDEEELPP. The Tify domain maps to 74-109; the sequence is LPGSPNQLTLLFQGEVYVFESVTPEKVQAVLLLLGS. In terms of domain architecture, CCT spans 143–185; the sequence is RVASLIRFREKRKERNFDKKIRYAVRKEVALRMQRRKGQFAGR. The segment at 215–242 adopts a GATA-type zinc-finger fold; that stretch reads CQNCGTSEKMTPAMRRGPAGPRTLCNAC. Residues 292–319 form a disordered region; sequence ITASHGEVMGDSTPANEAEIGAPKAQSQ.

This sequence belongs to the type IV zinc-finger family. Class C subfamily.

It localises to the nucleus. Transcriptional activator that specifically binds 5'-GATA-3' or 5'-GAT-3' motifs within gene promoters. This chain is GATA transcription factor 18, found in Oryza sativa subsp. indica (Rice).